The following is a 298-amino-acid chain: Protoheme IX farnesyltransferase (298 aa).

9 helical membrane-spanning segments follow: residues 28–48 (VVAL…EELV), 50–70 (LKVL…AAAI), 95–117 (LSPA…TLYA), 121–138 (PLTA…AVVY), 149–169 (NIVI…TSVT), 176–196 (AVLL…ALAV), 222–242 (CIFL…LIGM), 243–263 (TGMI…AYAW), and 274–294 (AFNM…ILLV).

It belongs to the UbiA prenyltransferase family. Protoheme IX farnesyltransferase subfamily.

It localises to the cell inner membrane. It carries out the reaction heme b + (2E,6E)-farnesyl diphosphate + H2O = Fe(II)-heme o + diphosphate. Its pathway is porphyrin-containing compound metabolism; heme O biosynthesis; heme O from protoheme: step 1/1. Its function is as follows. Converts heme B (protoheme IX) to heme O by substitution of the vinyl group on carbon 2 of heme B porphyrin ring with a hydroxyethyl farnesyl side group. This Idiomarina loihiensis (strain ATCC BAA-735 / DSM 15497 / L2-TR) protein is Protoheme IX farnesyltransferase.